Reading from the N-terminus, the 605-residue chain is UvrABC system protein C (605 aa).

The GIY-YIG domain occupies 14 to 92 (QSCGVYKMIG…IKSLKPSYNI (79 aa)). Residues 202 to 237 (KEVQRQLFSTMEKCSREMNYELAAVYRDRLKFLQQI) form the UVR domain.

The protein belongs to the UvrC family. In terms of assembly, interacts with UvrB in an incision complex.

The protein localises to the cytoplasm. Functionally, the UvrABC repair system catalyzes the recognition and processing of DNA lesions. UvrC both incises the 5' and 3' sides of the lesion. The N-terminal half is responsible for the 3' incision and the C-terminal half is responsible for the 5' incision. The sequence is that of UvrABC system protein C from Wolbachia pipientis subsp. Culex pipiens (strain wPip).